The following is a 492-amino-acid chain: Beta-Ala-His dipeptidase (492 aa).

Residue histidine 107 participates in Zn(2+) binding. Aspartate 109 is a catalytic residue. Aspartate 140 contacts Zn(2+). Glutamate 174 serves as the catalytic Proton acceptor. Glutamate 175 is a Zn(2+) binding site. At serine 194 the chain carries Phosphoserine. Aspartate 203 and histidine 453 together coordinate Zn(2+).

It belongs to the peptidase M20A family. As to quaternary structure, homodimer. Requires Zn(2+) as cofactor. As to expression, detected exclusively in kidney.

Its subcellular location is the secreted. It catalyses the reaction Preferential hydrolysis of the beta-Ala-|-His dipeptide (carnosine), and also anserine, Xaa-|-His dipeptides and other dipeptides including homocarnosine.. It carries out the reaction carnosine + H2O = beta-alanine + L-histidine. The enzyme catalyses anserine + H2O = N(pros)-methyl-L-histidine + beta-alanine. The catalysed reaction is L-alanyl-L-histidine + H2O = L-histidine + L-alanine. It catalyses the reaction glycyl-L-histidine + H2O = L-histidine + glycine. It carries out the reaction L-homocarnosine + H2O = 4-aminobutanoate + L-histidine. Catalyzes the peptide bond hydrolysis in Xaa-His dipeptides, displaying the highest activity toward carnosine (beta-alanyl-L-histidine) and anserine (beta-alanyl-3-methyl-histidine). This chain is Beta-Ala-His dipeptidase (Cndp1), found in Mus musculus (Mouse).